The following is a 117-amino-acid chain: Large ribosomal subunit protein bL20c (117 aa).

Belongs to the bacterial ribosomal protein bL20 family.

It localises to the plastid. It is found in the chloroplast. In terms of biological role, binds directly to 23S ribosomal RNA and is necessary for the in vitro assembly process of the 50S ribosomal subunit. It is not involved in the protein synthesizing functions of that subunit. This Carica papaya (Papaya) protein is Large ribosomal subunit protein bL20c.